The chain runs to 338 residues: Solute carrier family 35 member G5 (338 aa).

The disordered stretch occupies residues 1 to 27 (MAGSHPYFNLPDSTHPSPPSAPPSLRW). The next 9 membrane-spanning stretches (helical) occupy residues 37-57 (TNGLLVALLGGGLPAGFVGPL), 67-87 (LPSLELLICRCLFHLPIALLL), 102-122 (GWACFCALLNVLSIGCAYSAV), 160-180 (CGLLGSILGLIIILGPGLWTL), 190-210 (TLGYVQAFLGGLALSLGLLVY), 221-241 (TVAFLSGLVGLLGCVPGLFVL), 250-270 (LLSWSCVGAEGILALVSFTCV), 281-301 (LVCAVLHSEVVVALILQYYML), and 305-325 (VALSDIMGAGVVLGSIAIITA). The region spanning 49-174 (LPAGFVGPLS…SILGLIIILG (126 aa)) is the EamA 1 domain. Positions 272 to 325 (YAVTKAHPALVCAVLHSEVVVALILQYYMLHETVALSDIMGAGVVLGSIAIITA) constitute an EamA 2 domain.

It belongs to the SLC35G solute transporter family. Expressed in placenta and testis.

The protein localises to the membrane. The sequence is that of Solute carrier family 35 member G5 (SLC35G5) from Homo sapiens (Human).